The following is a 201-amino-acid chain: Small ribosomal subunit protein uS4c (201 aa).

In terms of domain architecture, S4 RNA-binding spans 91-153 (MRLDNIVFRL…NASKKIVETN (63 aa)).

It belongs to the universal ribosomal protein uS4 family. As to quaternary structure, part of the 30S ribosomal subunit. Contacts protein S5. The interaction surface between S4 and S5 is involved in control of translational fidelity.

The protein localises to the plastid. The protein resides in the cyanelle. In terms of biological role, one of the primary rRNA binding proteins, it binds directly to 16S rRNA where it nucleates assembly of the body of the 30S subunit. With S5 and S12 plays an important role in translational accuracy. The polypeptide is Small ribosomal subunit protein uS4c (rps4) (Cyanophora paradoxa).